Consider the following 352-residue polypeptide: ATPase GET3 (352 aa).

Residue 26 to 33 (KGGVGKTT) participates in ATP binding. Aspartate 57 is an active-site residue. Positions 243 and 270 each coordinate ATP. 2 residues coordinate Zn(2+): cysteine 283 and cysteine 286.

Belongs to the arsA ATPase family. In terms of assembly, homodimer. Component of the Golgi to ER traffic (GET) complex, which is composed of GET1, GET2 and GET3. Within the complex, GET1 and GET2 form a heterotetramer which is stabilized by phosphatidylinositol binding and which binds to the GET3 homodimer. Interacts with the chloride channel protein GEF1.

Its subcellular location is the cytoplasm. It is found in the endoplasmic reticulum. The protein localises to the golgi apparatus. Its function is as follows. ATPase required for the post-translational delivery of tail-anchored (TA) proteins to the endoplasmic reticulum. Recognizes and selectively binds the transmembrane domain of TA proteins in the cytosol. This complex then targets to the endoplasmic reticulum by membrane-bound receptors GET1 and GET2, where the tail-anchored protein is released for insertion. This process is regulated by ATP binding and hydrolysis. ATP binding drives the homodimer towards the closed dimer state, facilitating recognition of newly synthesized TA membrane proteins. ATP hydrolysis is required for insertion. Subsequently, the homodimer reverts towards the open dimer state, lowering its affinity for the GET1-GET2 receptor, and returning it to the cytosol to initiate a new round of targeting. Cooperates with the HDEL receptor ERD2 to mediate the ATP-dependent retrieval of resident ER proteins that contain a C-terminal H-D-E-L retention signal from the Golgi to the ER. Involved in low-level resistance to the oxyanions arsenite and arsenate, and in heat tolerance. The protein is ATPase GET3 of Vanderwaltozyma polyspora (strain ATCC 22028 / DSM 70294 / BCRC 21397 / CBS 2163 / NBRC 10782 / NRRL Y-8283 / UCD 57-17) (Kluyveromyces polysporus).